The chain runs to 441 residues: Protein arginine methyltransferase NDUFAF7, mitochondrial (441 aa).

A mitochondrion-targeting transit peptide spans 1–46; the sequence is MNFLAAAGVRRLCAMRAVLPCLWRGKYFSSGNEPAENNTVTPMLRH. The segment at 415–434 is disordered; sequence GRNHQTNARQSKPSPSPVAG. The span at 418-427 shows a compositional bias: polar residues; the sequence is HQTNARQSKP.

This sequence belongs to the NDUFAF7 family. Interacts with NDUFS2.

Its subcellular location is the mitochondrion. It carries out the reaction L-arginyl-[protein] + 2 S-adenosyl-L-methionine = N(omega),N(omega)'-dimethyl-L-arginyl-[protein] + 2 S-adenosyl-L-homocysteine + 2 H(+). In terms of biological role, arginine methyltransferase involved in the assembly or stability of mitochondrial NADH:ubiquinone oxidoreductase complex (complex I). Acts by mediating symmetric dimethylation of 'Arg-118' of NDUFS2 after it assembles into the complex I, stabilizing the early intermediate complex. The chain is Protein arginine methyltransferase NDUFAF7, mitochondrial from Bos taurus (Bovine).